We begin with the raw amino-acid sequence, 750 residues long: Cullin-5 (750 aa).

The Cullin neddylation domain maps to 678 to 739; sequence RFFKLQAAIV…QEYIRRTTDD (62 aa). Lysine 691 participates in a covalent cross-link: Glycyl lysine isopeptide (Lys-Gly) (interchain with G-Cter in NEDD8).

The protein belongs to the cullin family. Post-translationally, neddylated; which enhances the ubiquitination activity of SCF-like complex.

It participates in protein modification; protein ubiquitination. In terms of biological role, probable core component of cullin-based SCF-like E3 ubiquitin-protein ligase complexes which mediate the ubiquitination and subsequent proteasomal degradation of target proteins. The E3 ubiquitin-protein ligase activity of the complex is dependent on the neddylation of the cullin subunit. This Dictyostelium discoideum (Social amoeba) protein is Cullin-5 (culE).